We begin with the raw amino-acid sequence, 154 residues long: Aspartate carbamoyltransferase regulatory chain (154 aa).

The Zn(2+) site is built by C109, C114, C138, and C141.

This sequence belongs to the PyrI family. Contains catalytic and regulatory chains. Zn(2+) serves as cofactor.

Functionally, involved in allosteric regulation of aspartate carbamoyltransferase. This Sodalis glossinidius (strain morsitans) protein is Aspartate carbamoyltransferase regulatory chain.